We begin with the raw amino-acid sequence, 448 residues long: Probable cytosolic Fe-S cluster assembly factor Bm6838 (448 aa).

8 residues coordinate [4Fe-4S] cluster: C27, C66, C69, C72, C170, C226, C370, and C374.

Belongs to the NARF family.

Functionally, component of the cytosolic iron-sulfur (Fe/S) protein assembly machinery. Required for maturation of extramitochondrial Fe/S proteins. The protein is Probable cytosolic Fe-S cluster assembly factor Bm6838 of Brugia malayi (Filarial nematode worm).